Reading from the N-terminus, the 713-residue chain is Phosphoribosylformylglycinamidine synthase subunit PurL (713 aa).

Residues 1–17 (MSLSPSDRELVTEELGR) show a composition bias toward basic and acidic residues. A disordered region spans residues 1-20 (MSLSPSDRELVTEELGREPT). The active site involves H34. Y37 contacts ATP. A Mg(2+)-binding site is contributed by E85. Residues 86–89 (SHNH) and R108 contribute to the substrate site. The active-site Proton acceptor is the H87. D109 is a binding site for Mg(2+). A substrate-binding site is contributed by Q233. D261 is a Mg(2+) binding site. A substrate-binding site is contributed by 305–307 (ESQ). Positions 480 and 517 each coordinate ATP. N518 lines the Mg(2+) pocket. S520 contributes to the substrate binding site.

Belongs to the FGAMS family. In terms of assembly, monomer. Part of the FGAM synthase complex composed of 1 PurL, 1 PurQ and 2 PurS subunits.

It localises to the cytoplasm. It carries out the reaction N(2)-formyl-N(1)-(5-phospho-beta-D-ribosyl)glycinamide + L-glutamine + ATP + H2O = 2-formamido-N(1)-(5-O-phospho-beta-D-ribosyl)acetamidine + L-glutamate + ADP + phosphate + H(+). Its pathway is purine metabolism; IMP biosynthesis via de novo pathway; 5-amino-1-(5-phospho-D-ribosyl)imidazole from N(2)-formyl-N(1)-(5-phospho-D-ribosyl)glycinamide: step 1/2. Its function is as follows. Part of the phosphoribosylformylglycinamidine synthase complex involved in the purines biosynthetic pathway. Catalyzes the ATP-dependent conversion of formylglycinamide ribonucleotide (FGAR) and glutamine to yield formylglycinamidine ribonucleotide (FGAM) and glutamate. The FGAM synthase complex is composed of three subunits. PurQ produces an ammonia molecule by converting glutamine to glutamate. PurL transfers the ammonia molecule to FGAR to form FGAM in an ATP-dependent manner. PurS interacts with PurQ and PurL and is thought to assist in the transfer of the ammonia molecule from PurQ to PurL. The polypeptide is Phosphoribosylformylglycinamidine synthase subunit PurL (Natronomonas pharaonis (strain ATCC 35678 / DSM 2160 / CIP 103997 / JCM 8858 / NBRC 14720 / NCIMB 2260 / Gabara) (Halobacterium pharaonis)).